The primary structure comprises 121 residues: D-ornithine 4,5-aminomutase subunit alpha (121 aa).

As to quaternary structure, heterotetramer of 2 alpha (OraS) and 2 beta (OraE) subunits.

The enzyme catalyses D-ornithine = (2R,4S)-2,4-diaminopentanoate. Increased activity in the presence of dithiothreitol (DTT) in vitro. Inhibited by 1 mM potassium phosphate and potassium chloride. Inhibited by L-alpha-ornithine, D,L-alpha-lysine, L-beta-lysine (50%-60%), L-alpha-lysine (26%) and by delta-amino-n-valeric acid to a lesser extent. Significant decrease in activity is observed in the presence of 0.2 mM p-chloromercuribenzoate, N-ethylmaleimide and also by 2 mM iodoacetate to a lesser extent but not inhibited by arsenite. Its function is as follows. Component of a complex that catalyzes the reversible migration of the omega amino group of D-ornithine to C-4 to form (2R,4S)-2,4-diaminopentanoic acid. The role of OraS remains obscure; however, it seems to be required for a correct folding of the OraE subunit. The complex is active only on D-ornithine and 2,4-diaminopentanoic acid and not active on L-ornithine, L-beta-lysine, L-alpha-lysine or D-alpha-lysine. The polypeptide is D-ornithine 4,5-aminomutase subunit alpha (oraS) (Acetoanaerobium sticklandii (strain ATCC 12662 / DSM 519 / JCM 1433 / CCUG 9281 / NCIMB 10654 / HF) (Clostridium sticklandii)).